The chain runs to 120 residues: SPbeta prophage-derived DSR anti-defense 1 (120 aa).

Belongs to the DSR anti-defense 1 family. In terms of assembly, interacts with Bacillus subtilis DSR2 (via C-terminus) in a 2:4 ratio; this interaction leads to the absence of activation of the NADase defense activity of DSR2.

Counteracts the defense-associated sirtuin 2 (DSR2) defense system of the host. Inhibits the NADase activity of host DSR2 by competing with the tail tube protein that normally activates DSR2. The protein is SPbeta prophage-derived DSR anti-defense 1 (yotI) of Bacillus subtilis (strain 168).